Reading from the N-terminus, the 513-residue chain is ATP synthase subunit alpha (513 aa).

Residue 169–176 (GDRQTGKT) coordinates ATP.

The protein belongs to the ATPase alpha/beta chains family. As to quaternary structure, F-type ATPases have 2 components, CF(1) - the catalytic core - and CF(0) - the membrane proton channel. CF(1) has five subunits: alpha(3), beta(3), gamma(1), delta(1), epsilon(1). CF(0) has three main subunits: a(1), b(2) and c(9-12). The alpha and beta chains form an alternating ring which encloses part of the gamma chain. CF(1) is attached to CF(0) by a central stalk formed by the gamma and epsilon chains, while a peripheral stalk is formed by the delta and b chains.

Its subcellular location is the cell inner membrane. It carries out the reaction ATP + H2O + 4 H(+)(in) = ADP + phosphate + 5 H(+)(out). Its function is as follows. Produces ATP from ADP in the presence of a proton gradient across the membrane. The alpha chain is a regulatory subunit. The sequence is that of ATP synthase subunit alpha from Yersinia enterocolitica serotype O:8 / biotype 1B (strain NCTC 13174 / 8081).